The chain runs to 373 residues: Transaminase AMT5-2 (373 aa).

Arginine 92 contributes to the pyridoxal 5'-phosphate binding site. Lysine 196 is modified (N6-(pyridoxal phosphate)lysine). Glutamate 232 is a binding site for pyridoxal 5'-phosphate.

It belongs to the class-IV pyridoxal-phosphate-dependent aminotransferase family. It depends on pyridoxal 5'-phosphate as a cofactor.

It participates in mycotoxin biosynthesis. Its function is as follows. Transaminase; part of the gene clusters that mediate the biosynthesis of AM-toxins, host-selective toxins (HSTs) causing Alternaria blotch on apple, a worldwide distributed disease. AM-toxins are cyclic depsipeptides containing the 3 residues 2-hydroxy-isovaleric acid (2-HIV), dehydroalanine, L-alanine which are common for all 3 AM-toxins I to III. The fourth precursor is L-alpha-amino-methoxyphenyl-valeric acid (L-Amv) for AM-toxin I, L-alpha-amino-phenyl-valeric acid (L-Apv) for AM-toxin II, and L-alpha-amino-hydroxyphenyl-valeric acid (L-Ahv) for AM-toxin III. AM-toxins have two target sites for affecting susceptible apple cells; they cause invagination of the plasma membrane and electrolyte loss and chloroplast disorganization. The non-ribosomal peptide synthetase AMT1 contains 4 catalytic modules and is responsible for activation of each residue in AM-toxin. The aldo-keto reductase AMT2 catalyzes the conversion of 2-keto-isovaleric acid (2-KIV) to 2-hydroxy-isovaleric acid (2-HIV), one of the precursor residues incorporated by AMT1 during AM-toxin biosynthesis, by reduction of its ketone to an alcohol. The cytochrome P450 monooxygenase AMT3 and the thioesterase AMT4 are also important for AM-toxin production, but their exact function within the AM-toxin biosynthesis are not known yet. Up to 21 proteins (including AMT1 to AMT4) are predicted to be involved in AM-toxin biosynthesis since their expression ishighly up-regulated in AM-toxin-producing cultures. This Alternaria alternata (Alternaria rot fungus) protein is Transaminase AMT5-2.